The following is a 351-amino-acid chain: Holliday junction branch migration complex subunit RuvB (351 aa).

The interval 4-185 (HDRELVSPEA…FGFVAHMDFY (182 aa)) is large ATPase domain (RuvB-L). Residues L24, R25, G66, K69, T70, T71, 132–134 (EDF), R175, Y185, and R222 contribute to the ATP site. T70 contacts Mg(2+). Residues 186–256 (SPEELELILH…CARAALSLYE (71 aa)) form a small ATPAse domain (RuvB-S) region. The tract at residues 259–351 (DEGLDRLDRA…AALFDPDEEP (93 aa)) is head domain (RuvB-H). DNA contacts are provided by R314 and R319.

This sequence belongs to the RuvB family. In terms of assembly, homohexamer. Forms an RuvA(8)-RuvB(12)-Holliday junction (HJ) complex. HJ DNA is sandwiched between 2 RuvA tetramers; dsDNA enters through RuvA and exits via RuvB. An RuvB hexamer assembles on each DNA strand where it exits the tetramer. Each RuvB hexamer is contacted by two RuvA subunits (via domain III) on 2 adjacent RuvB subunits; this complex drives branch migration. In the full resolvosome a probable DNA-RuvA(4)-RuvB(12)-RuvC(2) complex forms which resolves the HJ.

Its subcellular location is the cytoplasm. The enzyme catalyses ATP + H2O = ADP + phosphate + H(+). In terms of biological role, the RuvA-RuvB-RuvC complex processes Holliday junction (HJ) DNA during genetic recombination and DNA repair, while the RuvA-RuvB complex plays an important role in the rescue of blocked DNA replication forks via replication fork reversal (RFR). RuvA specifically binds to HJ cruciform DNA, conferring on it an open structure. The RuvB hexamer acts as an ATP-dependent pump, pulling dsDNA into and through the RuvAB complex. RuvB forms 2 homohexamers on either side of HJ DNA bound by 1 or 2 RuvA tetramers; 4 subunits per hexamer contact DNA at a time. Coordinated motions by a converter formed by DNA-disengaged RuvB subunits stimulates ATP hydrolysis and nucleotide exchange. Immobilization of the converter enables RuvB to convert the ATP-contained energy into a lever motion, pulling 2 nucleotides of DNA out of the RuvA tetramer per ATP hydrolyzed, thus driving DNA branch migration. The RuvB motors rotate together with the DNA substrate, which together with the progressing nucleotide cycle form the mechanistic basis for DNA recombination by continuous HJ branch migration. Branch migration allows RuvC to scan DNA until it finds its consensus sequence, where it cleaves and resolves cruciform DNA. The protein is Holliday junction branch migration complex subunit RuvB of Thermobifida fusca (strain YX).